Here is a 307-residue protein sequence, read N- to C-terminus: Acyl transferase (307 aa).

Residues Ser116, Asp213, and His243 each act as charge relay system in the active site.

This sequence belongs to the LuxD family.

It functions in the pathway lipid metabolism; fatty acid reduction for biolumincescence. Acyl transferase is part of the fatty acid reductase system required for aldehyde biosynthesis; it produces fatty acids for the luminescent reaction. This is Acyl transferase from Photorhabdus luminescens (Xenorhabdus luminescens).